The primary structure comprises 151 residues: Ribonuclease H (151 aa).

The region spanning 1-143 is the RNase H type-1 domain; it reads MSDVVVIHTD…ADVLATRGLQ (143 aa). The Mg(2+) site is built by Asp10, Glu49, Asp71, and Asp135.

The protein belongs to the RNase H family. Monomer. The cofactor is Mg(2+).

The protein localises to the cytoplasm. It carries out the reaction Endonucleolytic cleavage to 5'-phosphomonoester.. Functionally, endonuclease that specifically degrades the RNA of RNA-DNA hybrids. This Mycolicibacterium gilvum (strain PYR-GCK) (Mycobacterium gilvum (strain PYR-GCK)) protein is Ribonuclease H.